The primary structure comprises 385 residues: O-phospho-L-seryl-tRNA:Cys-tRNA synthase (385 aa).

Pyridoxal 5'-phosphate-binding positions include 89–90 (AR), Asn195, and 218–220 (SGH). Lys221 bears the N6-(pyridoxal phosphate)lysine mark.

This sequence belongs to the SepCysS family. As to quaternary structure, homodimer. Interacts with SepRS. Pyridoxal 5'-phosphate is required as a cofactor.

The enzyme catalyses O-phospho-L-seryl-tRNA(Cys) + hydrogen sulfide + H(+) = L-cysteinyl-tRNA(Cys) + phosphate. Its function is as follows. Converts O-phospho-L-seryl-tRNA(Cys) (Sep-tRNA(Cys)) to L-cysteinyl-tRNA(Cys) (Cys-tRNA(Cys)). This Methanococcus aeolicus (strain ATCC BAA-1280 / DSM 17508 / OCM 812 / Nankai-3) protein is O-phospho-L-seryl-tRNA:Cys-tRNA synthase.